The chain runs to 834 residues: Protein translocase subunit SecA (834 aa).

ATP contacts are provided by residues Gln-85, 103 to 107, and Asp-491; that span reads GEGKT. The tract at residues 790–809 is disordered; sequence RETSTNINDGEGGSHEPIKR. Residues Cys-820, Cys-822, Cys-831, and Cys-832 each contribute to the Zn(2+) site.

It belongs to the SecA family. Monomer and homodimer. Part of the essential Sec protein translocation apparatus which comprises SecA, SecYEG and auxiliary proteins SecDF. Other proteins may also be involved. Requires Zn(2+) as cofactor.

The protein resides in the cell membrane. It is found in the cytoplasm. It carries out the reaction ATP + H2O + cellular proteinSide 1 = ADP + phosphate + cellular proteinSide 2.. Its function is as follows. Part of the Sec protein translocase complex. Interacts with the SecYEG preprotein conducting channel. Has a central role in coupling the hydrolysis of ATP to the transfer of proteins into and across the cell membrane, serving as an ATP-driven molecular motor driving the stepwise translocation of polypeptide chains across the membrane. The sequence is that of Protein translocase subunit SecA from Clostridium novyi (strain NT).